Here is a 51-residue protein sequence, read N- to C-terminus: Small polypeptide DEVIL 1 (51 aa).

The tract at residues 1 to 25 (MEMKRVMMSSAERSKEKKRSISRRL) is disordered. The span at 16–25 (EKKRSISRRL) shows a compositional bias: basic residues. Residues 20–51 (SISRRLGKYMKEQKGRIYIIRRCMVMLLCSHD) are required for DVL/RTFL small polypeptide activity. Residues 28–44 (YMKEQKGRIYIIRRCMV) traverse the membrane as a helical segment.

It belongs to the DVL/RTFL small polypeptides family. As to expression, mostly expressed in leaves and, to a lower extent, in roots and stems.

It is found in the cell membrane. Functionally, small polypeptide acting as a regulatory molecule which coordinates cellular responses required for differentiation, growth and development, including leaves shape, pedicule elongation, inflorescence organization and fruit maturation, probably by restricting polar cell proliferation in lateral organs and coordinating socket cell recruitment and differentiation at trichome sites. This Arabidopsis thaliana (Mouse-ear cress) protein is Small polypeptide DEVIL 1.